The primary structure comprises 369 residues: Glutamate 5-kinase (369 aa).

Lys9 is an ATP binding site. Substrate is bound by residues Ser49, Asp136, and Asn148. ATP is bound by residues 168–169 (TD) and 210–216 (TGGMLTK). Positions 275 to 355 (QGSIWVDKGA…KGVLIYRDDW (81 aa)) constitute a PUA domain.

Belongs to the glutamate 5-kinase family.

The protein localises to the cytoplasm. It catalyses the reaction L-glutamate + ATP = L-glutamyl 5-phosphate + ADP. It functions in the pathway amino-acid biosynthesis; L-proline biosynthesis; L-glutamate 5-semialdehyde from L-glutamate: step 1/2. Its function is as follows. Catalyzes the transfer of a phosphate group to glutamate to form L-glutamate 5-phosphate. This Streptococcus pneumoniae serotype 2 (strain D39 / NCTC 7466) protein is Glutamate 5-kinase.